A 133-amino-acid polypeptide reads, in one-letter code: MILVDSDVLIAHLRGVVAARDWLVSARKDGPLAISVVSTAELIGGMRTAERREVWRLLASFRVQPATEVIARRAGDMMRRYRRSHNRIGLGDYLIAATADVQDLQLATLNVWHFPMFEQLKPPFAVPGHRPRA.

The region spanning 2–119 (ILVDSDVLIA…NVWHFPMFEQ (118 aa)) is the PINc domain. Mg(2+)-binding residues include D5 and D92.

This sequence belongs to the PINc/VapC protein family. The cofactor is Mg(2+).

Functionally, toxic component of a type II toxin-antitoxin (TA) system. An RNase. The cognate antitoxin is VapB10. This Mycobacterium tuberculosis (strain CDC 1551 / Oshkosh) protein is Ribonuclease VapC10.